The sequence spans 307 residues: GTPase Era (307 aa).

The Era-type G domain maps to 17–186 (RCGFVAIVGR…LELIKPYLPE (170 aa)). A G1 region spans residues 25 to 32 (GRPNVGKS). Position 25 to 32 (25 to 32 (GRPNVGKS)) interacts with GTP. Residues 51–55 (QTTRN) form a G2 region. Residues 72-75 (DTPG) are G3. GTP is bound by residues 72-76 (DTPGF) and 133-136 (NKID). Residues 133–136 (NKID) form a G4 region. The tract at residues 165–167 (VSA) is G5. Positions 217–293 (LGEELPYAMN…FLKVWVKVKS (77 aa)) constitute a KH type-2 domain.

It belongs to the TRAFAC class TrmE-Era-EngA-EngB-Septin-like GTPase superfamily. Era GTPase family. Monomer.

Its subcellular location is the cytoplasm. The protein localises to the cell inner membrane. Functionally, an essential GTPase that binds both GDP and GTP, with rapid nucleotide exchange. Plays a role in 16S rRNA processing and 30S ribosomal subunit biogenesis and possibly also in cell cycle regulation and energy metabolism. In Neisseria meningitidis serogroup A / serotype 4A (strain DSM 15465 / Z2491), this protein is GTPase Era.